The chain runs to 574 residues: Meiotically up-regulated gene 72 protein (574 aa).

The interval 339–374 is disordered; sequence VRAGTPQSSPNFNPAMRRSPVGAASRSPSRSTIGIS. At T343 the chain carries Phosphothreonine. The segment covering 364–374 has biased composition (polar residues); it reads RSPSRSTIGIS. A Phosphoserine modification is found at S392. 2 disordered regions span residues 422-451 and 495-574; these read TSPSGLNPTGRPSRFGGRVRGNPLTMNKAG and RNRR…RRMD. Residues 541–554 are compositionally biased toward polar residues; that stretch reads LYDTSRYPTRNSKP.

The protein resides in the cytoplasm. Functionally, has a role in meiosis. This Schizosaccharomyces pombe (strain 972 / ATCC 24843) (Fission yeast) protein is Meiotically up-regulated gene 72 protein (mug72).